The following is a 400-amino-acid chain: Enoyl-[acyl-carrier-protein] reductase [NADH] (400 aa).

NAD(+) contacts are provided by residues 48-53 (GSSSGY), 74-75 (FE), 111-112 (DA), and 139-140 (LA). Residue Y225 participates in substrate binding. Y235 (proton donor) is an active-site residue. NAD(+) contacts are provided by residues K244 and 273–275 (VVT).

It belongs to the TER reductase family. In terms of assembly, monomer.

The enzyme catalyses a 2,3-saturated acyl-[ACP] + NAD(+) = a (2E)-enoyl-[ACP] + NADH + H(+). It functions in the pathway lipid metabolism; fatty acid biosynthesis. Functionally, involved in the final reduction of the elongation cycle of fatty acid synthesis (FAS II). Catalyzes the reduction of a carbon-carbon double bond in an enoyl moiety that is covalently linked to an acyl carrier protein (ACP). This chain is Enoyl-[acyl-carrier-protein] reductase [NADH], found in Shewanella frigidimarina (strain NCIMB 400).